Here is a 262-residue protein sequence, read N- to C-terminus: MATLLEKTRKITAILQDGVTDLQQELPYNSMTERLANVIDCNACVINTKGELLGYSLPYNTNNDRVDQFFYDRKLPDEYVRAAVRVYDTMANVPVDRPLAIFPEESLSDFPKGVTTLAPIYGSGMRLGTFIMWREDGEFTDDDLVLVELATTVIGVQLSNLKLEQMEENIRKDTMATMAVNTLSYSEMKAVKAIIEELDGEEGHVIASVIADKIGITRSVIVNALRKLESAGVIESRSLGMKGTYLKVLNTGLFDKLAGRNF.

The GAF domain stretch occupies residues 1 to 159 (MATLLEKTRK…ATTVIGVQLS (159 aa)). The H-T-H motif DNA-binding region spans 207-226 (ASVIADKIGITRSVIVNALR).

This sequence belongs to the CodY family.

The protein localises to the cytoplasm. Functionally, DNA-binding global transcriptional regulator which is involved in the adaptive response to starvation and acts by directly or indirectly controlling the expression of numerous genes in response to nutrient availability. During rapid exponential growth, CodY is highly active and represses genes whose products allow adaptation to nutrient depletion. In Lactococcus lactis subsp. cremoris (strain SK11), this protein is Global transcriptional regulator CodY.